A 406-amino-acid chain; its full sequence is 4-O-methyl-glucuronoyl methylesterase (406 aa).

Positions 1–17 (MAFRWLSFLLLALPVLA) are cleaved as a signal peptide. C31 and C64 are oxidised to a cystine. N-linked (GlcNAc...) asparagine glycans are attached at residues N100, N110, N122, and N178. Residues 215–220 (GCSRDG) carry the GXSYXG catalytic site motif motif. Disulfide bonds link C216–C352 and C248–C324. S217 functions as the Nucleophile in the catalytic mechanism. Substrate contacts are provided by K221, Q263, and E271. An N-linked (GlcNAc...) asparagine glycan is attached at N285. W315 is a substrate binding site. A glycan (N-linked (GlcNAc...) asparagine) is linked at N348. The Proton donor/acceptor role is filled by H351. N376, N387, and N398 each carry an N-linked (GlcNAc...) asparagine glycan.

This sequence belongs to the carbohydrate esterase 15 (CE15) family.

The protein localises to the secreted. It carries out the reaction a 4-O-methyl-alpha-D-glucuronosyl ester derivative + H2O = 4-O-methyl-alpha-D-glucuronate derivative + an alcohol + H(+). Functionally, glucuronoyl esterase which may play a significant role in biomass degradation, as it is considered to disconnect hemicellulose from lignin through the hydrolysis of the ester bond between 4-O-methyl-D-glucuronic acid residues of glucuronoxylans and aromatic alcohols of lignin. In Phanerochaete carnosa (strain HHB-10118-sp) (White-rot fungus), this protein is 4-O-methyl-glucuronoyl methylesterase.